We begin with the raw amino-acid sequence, 379 residues long: Protein-glutamate methylesterase/protein-glutamine glutaminase (379 aa).

The Response regulatory domain maps to 4-121; it reads KILVVDDSIF…AANRQDAVAL (118 aa). A 4-aspartylphosphate modification is found at Asp55. One can recognise a CheB-type methylesterase domain in the interval 186 to 379; sequence SGKKYRCLAI…FESHILKEMA (194 aa). Residues Ser198, His225, and Asp323 contribute to the active site.

The protein belongs to the CheB family. Post-translationally, phosphorylated by CheA. Phosphorylation of the N-terminal regulatory domain activates the methylesterase activity.

It is found in the cytoplasm. It catalyses the reaction [protein]-L-glutamate 5-O-methyl ester + H2O = L-glutamyl-[protein] + methanol + H(+). The enzyme catalyses L-glutaminyl-[protein] + H2O = L-glutamyl-[protein] + NH4(+). In terms of biological role, involved in chemotaxis. Part of a chemotaxis signal transduction system that modulates chemotaxis in response to various stimuli. Catalyzes the demethylation of specific methylglutamate residues introduced into the chemoreceptors (methyl-accepting chemotaxis proteins or MCP) by CheR. Also mediates the irreversible deamidation of specific glutamine residues to glutamic acid. The chain is Protein-glutamate methylesterase/protein-glutamine glutaminase from Pseudoalteromonas atlantica (strain T6c / ATCC BAA-1087).